Reading from the N-terminus, the 905-residue chain is Core protein VP3 (905 aa).

It belongs to the orbivirus VP3 family.

It is found in the virion. In terms of biological role, the VP3 protein is one of the five proteins (with VP1, VP4, VP6 and VP7) which form the inner capsid of the virus. The protein is Core protein VP3 (Segment-3) of African horse sickness virus (AHSV).